Reading from the N-terminus, the 126-residue chain is MEKKIALIAHDKKKDDLVNFVKQNYLFLSKFKLIATGTTGSRIQQATDLTIIKYKSGPMGGDQQIGAEVAEGNVLAIFFFRDPLTNQPHEPDVSALIRLCDVHNIPLATNVKTAEILIKGFEGLNT.

In terms of domain architecture, MGS-like spans Met-1–Thr-126. Residues His-10, Lys-14, Thr-36 to Thr-39, and Ser-56 to Gly-57 each bind substrate. The active-site Proton donor/acceptor is the Asp-62. Residue His-89 participates in substrate binding.

This sequence belongs to the methylglyoxal synthase family.

The catalysed reaction is dihydroxyacetone phosphate = methylglyoxal + phosphate. Functionally, catalyzes the formation of methylglyoxal from dihydroxyacetone phosphate. The chain is Methylglyoxal synthase from Borrelia garinii subsp. bavariensis (strain ATCC BAA-2496 / DSM 23469 / PBi) (Borreliella bavariensis).